Reading from the N-terminus, the 433-residue chain is Enolase (433 aa).

(2R)-2-phosphoglycerate is bound at residue glutamine 167. Glutamate 209 (proton donor) is an active-site residue. Mg(2+) contacts are provided by aspartate 246, glutamate 291, and aspartate 318. (2R)-2-phosphoglycerate is bound by residues lysine 343, arginine 372, serine 373, and lysine 394. Lysine 343 functions as the Proton acceptor in the catalytic mechanism.

The protein belongs to the enolase family. Component of the RNA degradosome, a multiprotein complex involved in RNA processing and mRNA degradation. Mg(2+) is required as a cofactor.

The protein resides in the cytoplasm. It is found in the secreted. The protein localises to the cell surface. It catalyses the reaction (2R)-2-phosphoglycerate = phosphoenolpyruvate + H2O. It participates in carbohydrate degradation; glycolysis; pyruvate from D-glyceraldehyde 3-phosphate: step 4/5. Catalyzes the reversible conversion of 2-phosphoglycerate (2-PG) into phosphoenolpyruvate (PEP). It is essential for the degradation of carbohydrates via glycolysis. The polypeptide is Enolase (Haemophilus ducreyi (strain 35000HP / ATCC 700724)).